The primary structure comprises 1232 residues: Chromosome-associated kinesin KIF4A (1232 aa).

A Kinesin motor domain is found at 9–336 (PVRVALRCRP…LRYADRARKI (328 aa)). ATP is bound at residue 88–95 (GQTGSGKT). A coiled-coil region spans residues 350 to 999 (ELNHLKQQVQ…IKQKLTLLQV (650 aa)). Ser394 bears the Phosphoserine mark. The interval 496–515 (AQVETSPETSRSSDAFTTQH) is disordered. The span at 497–515 (QVETSPETSRSSDAFTTQH) shows a compositional bias: polar residues. The segment at 663-1232 (QWKQKKDKEV…GCSPIEEEAH (570 aa)) is required for the interaction with PRC1. A Nuclear localization signal motif is present at residues 793–798 (PKLRRR). A Phosphothreonine modification is found at Thr799. 4 positions are modified to phosphoserine: Ser801, Ser810, Ser815, and Ser951. Position 995 is a phosphothreonine (Thr995). Positions 1000 to 1232 (ASRQKHLPKD…GCSPIEEEAH (233 aa)) are globular. Residues Ser1001, Ser1013, Ser1017, Ser1028, and Ser1126 each carry the phosphoserine modification. A CRD; required for [4Fe-4S] cluster binding and localization to the spindle midzone and midbody during anaphase and telophase region spans residues 1086–1144 (CSCKGWCGNKQCGCRKQKSDCGVDCCCDPTKCRNRQQGKDSLGTVERTQDSEGSFKLED). Residues 1122 to 1142 (QGKDSLGTVERTQDSEGSFKL) are disordered. Over residues 1132–1142 (RTQDSEGSFKL) the composition is skewed to basic and acidic residues. Thr1181 carries the post-translational modification Phosphothreonine. Ser1186 carries the phosphoserine modification. Lys1194 participates in a covalent cross-link: Glycyl lysine isopeptide (Lys-Gly) (interchain with G-Cter in SUMO2). A Phosphoserine modification is found at Ser1225.

Belongs to the TRAFAC class myosin-kinesin ATPase superfamily. Kinesin family. Chromokinesin subfamily. As to quaternary structure, interacts with the cytosolic iron-sulfur protein assembly (CIA) complex components CIAO2B and MMS19; the interactions facilitate the transfer of Fe-S clusters to KIF4A to ensure proper localization of KIF4A to mitotic machinery components. Interacts (via C-terminus) with unphosphorylated PRC1 (via N-terminus); the interaction is required for the progression of mitosis. It depends on [2Fe-2S] cluster as a cofactor. Requires [4Fe-4S] cluster as cofactor. As to expression, highly expressed in hematopoietic tissues, fetal liver, spleen, thymus and adult thymus and bone marrow. Lower levels are found in heart, testis, kidney, colon and lung.

It localises to the nucleus matrix. It is found in the cytoplasm. The protein resides in the cytoskeleton. Its subcellular location is the spindle. The protein localises to the midbody. It localises to the chromosome. Its function is as follows. Iron-sulfur (Fe-S) cluster binding motor protein that has a role in chromosome segregation during mitosis. Translocates PRC1 to the plus ends of interdigitating spindle microtubules during the metaphase to anaphase transition, an essential step for the formation of an organized central spindle midzone and midbody and for successful cytokinesis. May play a role in mitotic chromosomal positioning and bipolar spindle stabilization. The protein is Chromosome-associated kinesin KIF4A (KIF4A) of Homo sapiens (Human).